The chain runs to 463 residues: L-seryl-tRNA(Sec) selenium transferase (463 aa).

An N6-(pyridoxal phosphate)lysine modification is found at Lys-295.

The protein belongs to the SelA family. As to quaternary structure, homodecamer; pentamer of dimers. Binds only one seryl-tRNA(Sec) per dimer. The cofactor is pyridoxal 5'-phosphate.

Its subcellular location is the cytoplasm. The catalysed reaction is L-seryl-tRNA(Sec) + selenophosphate + H(+) = L-selenocysteinyl-tRNA(Sec) + phosphate. It functions in the pathway aminoacyl-tRNA biosynthesis; selenocysteinyl-tRNA(Sec) biosynthesis; selenocysteinyl-tRNA(Sec) from L-seryl-tRNA(Sec) (bacterial route): step 1/1. In terms of biological role, converts seryl-tRNA(Sec) to selenocysteinyl-tRNA(Sec) required for selenoprotein biosynthesis. The polypeptide is L-seryl-tRNA(Sec) selenium transferase (Shigella boydii serotype 18 (strain CDC 3083-94 / BS512)).